We begin with the raw amino-acid sequence, 345 residues long: Cuticle collagen 14 (345 aa).

Triple-helical region stretches follow at residues 156-185, 207-263, and 268-333; these read GPPG…PGPP, GDGG…PGTY, and GPAG…PGSC. The disordered stretch occupies residues 161-345; the sequence is AGDGGRDGAD…CPPARLAPGY (185 aa). 3 stretches are compositionally biased toward pro residues: residues 179–191, 198–223, and 278–290; these read IGPP…PGPD, PQCP…PPGA, and RPGP…PAGP. Residues 292-304 are compositionally biased toward gly residues; sequence GENGKGGGQGPSG.

This sequence belongs to the cuticular collagen family. Collagen polypeptide chains are complexed within the cuticle by disulfide bonds and other types of covalent cross-links.

Nematode cuticles are composed largely of collagen-like proteins. The cuticle functions both as an exoskeleton and as a barrier to protect the worm from its environment. The sequence is that of Cuticle collagen 14 (col-14) from Caenorhabditis elegans.